The sequence spans 45 residues: Globin, minor monomeric component (45 aa).

In terms of domain architecture, Globin spans Gly-1–Phe-45.

The protein belongs to the globin family. In terms of assembly, monomer.

This Glycera dibranchiata (Bloodworm) protein is Globin, minor monomeric component.